A 333-amino-acid polypeptide reads, in one-letter code: Thiamine-monophosphate kinase (333 aa).

Mg(2+) contacts are provided by Asp-35, Thr-50, and Asp-51. Substrate is bound at residue His-58. Residue Asp-80 participates in Mg(2+) binding. Residues Tyr-111, 128–129 (GD), and Arg-153 each bind ATP. Asp-129 is a binding site for Mg(2+). Asp-230 is a binding site for Mg(2+). Ser-232 is a binding site for ATP. Asp-233 serves as a coordination point for Mg(2+). 2 residues coordinate substrate: Glu-278 and Phe-330.

The protein belongs to the thiamine-monophosphate kinase family.

It catalyses the reaction thiamine phosphate + ATP = thiamine diphosphate + ADP. It functions in the pathway cofactor biosynthesis; thiamine diphosphate biosynthesis; thiamine diphosphate from thiamine phosphate: step 1/1. In terms of biological role, catalyzes the ATP-dependent phosphorylation of thiamine-monophosphate (TMP) to form thiamine-pyrophosphate (TPP), the active form of vitamin B1. This Prochlorococcus marinus (strain SARG / CCMP1375 / SS120) protein is Thiamine-monophosphate kinase.